A 339-amino-acid chain; its full sequence is Vomeronasal type-1 receptor A14 (339 aa).

Residues 1 to 42 (MMGVQICQGMMSEIPFFSPPPQFSYMMNKNIRLHTDSNIRNT) lie on the Extracellular side of the membrane. Residues 43–63 (FFTDIGIGISANSLLLLFNIF) traverse the membrane as a helical segment. The Cytoplasmic segment spans residues 64-75 (KLTRGQRSRLTD). Residues 76–96 (LPIGLLSLINLLMLLMAAFIA) form a helical membrane-spanning segment. The Extracellular portion of the chain corresponds to 97-119 (TDTFISWKGWDDIICKFLVYLYR). A disulfide bridge links cysteine 111 with cysteine 198. Residues 120 to 140 (TFRGLSLCTSCLLSVLQAIIL) form a helical membrane-spanning segment. Topologically, residues 141–160 (SPRSSCLAKFKHKPPHHISC) are cytoplasmic. A helical membrane pass occupies residues 161-181 (AILSLSVLYMFIGSHLLVSII). At 182–213 (ATPNLTTNDFIHVTQSCSILPMSYLMQCMFST) the chain is on the extracellular side. N-linked (GlcNAc...) asparagine glycosylation is present at asparagine 185. Residues 214–234 (LLAIRDVFLISLMVLSTWYMV) traverse the membrane as a helical segment. At 235–264 (ALLCRHRKQTRHLQGTSLSPKASPEQRATR) the chain is on the cytoplasmic side. A helical membrane pass occupies residues 265–285 (SILMLMSLFVLMSVFDSIVCS). The Extracellular portion of the chain corresponds to 286 to 296 (SRTMYLNDPIS). Residues 297-317 (YSIQLFMVHIYATVSPFVFIV) form a helical membrane-spanning segment. At 318 to 339 (TEKHIVNFLRSVCEGDECLNIH) the chain is on the cytoplasmic side.

This sequence belongs to the G-protein coupled receptor 1 family.

It localises to the cell membrane. Its function is as follows. Putative pheromone receptor implicated in the regulation of social as well as reproductive behavior. This chain is Vomeronasal type-1 receptor A14, found in Rattus norvegicus (Rat).